A 184-amino-acid polypeptide reads, in one-letter code: Intraflagellar transport protein 22 homolog (184 aa).

GTP contacts are provided by residues 10 to 17 (GPTESGKT), 62 to 66 (DCGGD), and 122 to 125 (KKPG).

The protein belongs to the small GTPase superfamily. Rab family.

This chain is Intraflagellar transport protein 22 homolog (ift22), found in Xenopus tropicalis (Western clawed frog).